We begin with the raw amino-acid sequence, 218 residues long: uncharacterized protein (218 aa).

A CN hydrolase domain is found at 4 to 207; sequence WKVAAAQYEP…SLLLVGQRSS (204 aa).

This is an uncharacterized protein from Escherichia coli (strain K12).